Here is a 32-residue protein sequence, read N- to C-terminus: Conotoxin sr7a (32 aa).

3 disulfide bridges follow: C1–C17, C8–C21, and C16–C31. At S32 the chain carries Serine amide.

Expressed by the venom duct.

It localises to the secreted. Elicits hyperactivity when injected intracranially into mice and produces paralysis when injected into the pedal muscle of freshwater snails, Pomacea paludosa, but it has no apparent effect after intramuscular injection into the limpet Patella opea or the freshwater fish Lebistes reticulatus. This chain is Conotoxin sr7a, found in Conus spurius (Alphabet cone).